Reading from the N-terminus, the 545-residue chain is MAKEIIFSDEARNKLYEGVKKLNDAVKVTMGPRGRNVLIQKSFGAPSITKDGVSVAKEVELKDSLENMGASLVREVASKTADQAGDGTTTATVLAHAIFKEGLRNITAGANPIEVKRGMDKACEAIVAELKKLSREVKDKKEIAQVATISANSDEKIGNLIADAMEKVGKDGVITVEEAKSINDELNVVEGMQFDRGYLSPYFITNAEKMTVELSSPYILLFDKKITNLKDLLPVLEQIQKTGKPLLIIAEDIEGEALATLVVNKLRGVLNISAVKAPGFGDRRKAMLEDIAILTGGEVISEELGRTLESATIQDLGQASSVIIDKDNTTIVNGAGEKANIDARVNQIKAQIAETTSDYDREKLQERLAKLSGGVAVIKVGAATETEMKEKKDRVDDALSATKAAVEEGIVIGGGAALIKAKAKIKLDLQGDEAIGAAIVERALRAPLRQIAENAGFDAGVVVNSVENAKDENTGFDAAKGEYVNMLESGIIDPVKVERVALLNAVSVASMLLTTEATISEIKEDKPTMPDMSGMGGMGGMGGMM.

ATP is bound by residues 29–32 (TMGP), lysine 50, 86–90 (DGTTT), glycine 414, 477–479 (DAA), and aspartate 493.

The protein belongs to the chaperonin (HSP60) family. Forms a cylinder of 14 subunits composed of two heptameric rings stacked back-to-back. Interacts with the co-chaperonin GroES.

It is found in the cytoplasm. The catalysed reaction is ATP + H2O + a folded polypeptide = ADP + phosphate + an unfolded polypeptide.. Its function is as follows. Together with its co-chaperonin GroES, plays an essential role in assisting protein folding. The GroEL-GroES system forms a nano-cage that allows encapsulation of the non-native substrate proteins and provides a physical environment optimized to promote and accelerate protein folding. This is Chaperonin GroEL from Campylobacter jejuni subsp. jejuni serotype O:2 (strain ATCC 700819 / NCTC 11168).